We begin with the raw amino-acid sequence, 727 residues long: Pre-B-cell leukemia transcription factor-interacting protein 1 (727 aa).

Over residues 1 to 10 the composition is skewed to polar residues; the sequence is MASCPDSDNS. The segment at 1-135 is disordered; that stretch reads MASCPDSDNS…SPHRSLPSSP (135 aa). Low complexity predominate over residues 39-53; the sequence is RAPQSPSRAAAEESA. Serine 43 is modified (phosphoserine). Over residues 61–70 the composition is skewed to polar residues; sequence TVSQNESSKS. Residues serine 130, serine 134, serine 147, serine 148, and serine 149 each carry the phosphoserine modification. The residue at position 153 (threonine 153) is a Phosphothreonine. 2 coiled-coil regions span residues 269–353 and 380–421; these read QNMA…QGAD and SPGF…SLKE. The short motif at 488 to 506 is the Nuclear localization signal element; that stretch reads WKTEHWKHKKEASGREKSW. Disordered stretches follow at residues 491–568 and 701–727; these read EHWK…AKDR and KRSG…HRQG. Basic and acidic residues-rich tracts occupy residues 498–544, 551–568, and 716–727; these read EASG…EPPR, PSGE…AKDR, and GPREEHSPHRQG. A Nuclear localization signal motif is present at residues 696-719; it reads DKALKKRSGKKDKHLQNRVVGPRE.

Interacts with ESR1, PBX1, PBX2 and PBX3. Interacts with TEX11.

Its subcellular location is the cytoplasm. The protein resides in the cytoskeleton. It localises to the nucleus. In terms of biological role, regulator of pre-B-cell leukemia transcription factors (BPXs) function. Inhibits the binding of PBX1-HOX complex to DNA and blocks the transcriptional activity of E2A-PBX1. Tethers estrogen receptor-alpha (ESR1) to microtubules and allows them to influence estrogen receptors-alpha signaling. This is Pre-B-cell leukemia transcription factor-interacting protein 1 (PBXIP1) from Bos taurus (Bovine).